The chain runs to 194 residues: Holliday junction branch migration complex subunit RuvA (194 aa).

The segment at 1 to 64 (MIGRLRGVLT…DDSAALYGFL (64 aa)) is domain I. A domain II region spans residues 65 to 140 (SESERRLFRH…RAADFNNGIS (76 aa)). The flexible linker stretch occupies residues 140–144 (STSGK). A domain III region spans residues 145–194 (LNLDTVSEAALALQQLGYKPAEAARMARDAGTESDDVASVIKKALQAALR).

This sequence belongs to the RuvA family. Homotetramer. Forms an RuvA(8)-RuvB(12)-Holliday junction (HJ) complex. HJ DNA is sandwiched between 2 RuvA tetramers; dsDNA enters through RuvA and exits via RuvB. An RuvB hexamer assembles on each DNA strand where it exits the tetramer. Each RuvB hexamer is contacted by two RuvA subunits (via domain III) on 2 adjacent RuvB subunits; this complex drives branch migration. In the full resolvosome a probable DNA-RuvA(4)-RuvB(12)-RuvC(2) complex forms which resolves the HJ.

It is found in the cytoplasm. Functionally, the RuvA-RuvB-RuvC complex processes Holliday junction (HJ) DNA during genetic recombination and DNA repair, while the RuvA-RuvB complex plays an important role in the rescue of blocked DNA replication forks via replication fork reversal (RFR). RuvA specifically binds to HJ cruciform DNA, conferring on it an open structure. The RuvB hexamer acts as an ATP-dependent pump, pulling dsDNA into and through the RuvAB complex. HJ branch migration allows RuvC to scan DNA until it finds its consensus sequence, where it cleaves and resolves the cruciform DNA. This is Holliday junction branch migration complex subunit RuvA from Xylella fastidiosa (strain 9a5c).